Here is a 713-residue protein sequence, read N- to C-terminus: Pro-neuregulin-3, membrane-bound isoform (713 aa).

Residues 1–362 (MSEGAAGASP…MESEDVYQRQ (362 aa)) are Extracellular-facing. Disordered regions lie at residues 28–48 (AAAAAAAGGGPDGGGEGAAEP), 119–220 (SSFP…STQA), and 251–282 (AAASSSSPSSTSSTTTTPETSTSPKFHTTTYS). The segment covering 34-44 (AGGGPDGGGEG) has biased composition (gly residues). The span at 127-148 (TTTTTTSTTSPATPSAGGAASS) shows a compositional bias: low complexity. Residues 149–163 (RTPNRISTRLTTITR) are compositionally biased toward polar residues. Low complexity-rich tracts occupy residues 195-207 (STTAPFFSSSTPG) and 254-274 (SSSSPSSTSSTTTTPETSTSP). Residues 288-331 (HFKPCRDKDLAYCLNDGECFVIETLTGSHKHCRCKEGYQGVRCD) form the EGF-like domain. Intrachain disulfides connect C292-C306, C300-C319, and C321-C330. A helical membrane pass occupies residues 363–383 (VLSISCIIFGIVIVGMFCAAF). At 384–713 (YFKSKKQAKQ…EIQRDSVLTK (330 aa)) the chain is on the cytoplasmic side. Residues 449 to 496 (SAPQSFPEVTSPDRGSQPIKHHSPGQRSGMLHRNTFRRAPPSPRSRLG) form a disordered region.

The protein belongs to the neuregulin family. As to quaternary structure, interacts with ERBB4. Proteolytic cleavage close to the plasma membrane on the external face leads to the release of the soluble growth factor form. In terms of processing, extensive glycosylation precedes the proteolytic cleavage. In terms of tissue distribution, expressed in sympathetic, motor, and sensory neurons.

It is found in the cell membrane. It localises to the secreted. Its function is as follows. Direct ligand for the ERBB4 tyrosine kinase receptor. Binding results in ligand-stimulated tyrosine phosphorylation and activation of the receptor. Does not bind to the EGF receptor, ERBB2 or ERBB3 receptors. This chain is Pro-neuregulin-3, membrane-bound isoform (Nrg3), found in Mus musculus (Mouse).